Reading from the N-terminus, the 458-residue chain is UDP-N-acetylmuramate--L-alanine ligase (458 aa).

Position 118 to 124 (118 to 124) interacts with ATP; it reads GTHGKTT.

Belongs to the MurCDEF family.

The protein localises to the cytoplasm. The catalysed reaction is UDP-N-acetyl-alpha-D-muramate + L-alanine + ATP = UDP-N-acetyl-alpha-D-muramoyl-L-alanine + ADP + phosphate + H(+). The protein operates within cell wall biogenesis; peptidoglycan biosynthesis. Cell wall formation. The chain is UDP-N-acetylmuramate--L-alanine ligase from Clostridium acetobutylicum (strain ATCC 824 / DSM 792 / JCM 1419 / IAM 19013 / LMG 5710 / NBRC 13948 / NRRL B-527 / VKM B-1787 / 2291 / W).